Here is an 89-residue protein sequence, read N- to C-terminus: Cytochrome c6 (89 aa).

Cys15, Cys18, His19, and Met61 together coordinate heme c.

It belongs to the cytochrome c family. PetJ subfamily. As to quaternary structure, monomer. Post-translationally, binds 1 heme c group covalently per subunit.

The protein resides in the plastid. It is found in the chloroplast thylakoid lumen. Its function is as follows. Functions as an electron carrier between membrane-bound cytochrome b6-f and photosystem I in oxygenic photosynthesis. In Tetradesmus obliquus (Green alga), this protein is Cytochrome c6 (petJ).